We begin with the raw amino-acid sequence, 359 residues long: Protein Wnt-5b (359 aa).

Residues M1–A17 form the signal peptide. The cysteines at positions 83 and 94 are disulfide-linked. 2 N-linked (GlcNAc...) asparagine glycosylation sites follow: N93 and N99. Disulfide bonds link C133–C141, C143–C161, C217–C231, C219–C226, C288–C319, C304–C314, C318–C358, C334–C349, C336–C346, and C341–C342. S223 carries the O-palmitoleoyl serine; by PORCN lipid modification. 2 N-linked (GlcNAc...) asparagine glycosylation sites follow: N291 and N305.

It belongs to the Wnt family. As to quaternary structure, interacts with PORCN. Palmitoleoylation is required for efficient binding to frizzled receptors. Depalmitoleoylation leads to Wnt signaling pathway inhibition.

It is found in the secreted. The protein resides in the extracellular space. The protein localises to the extracellular matrix. Ligand for members of the frizzled family of seven transmembrane receptors. Probable developmental protein. May be a signaling molecule which affects the development of discrete regions of tissues. Is likely to signal over only few cell diameters. This Homo sapiens (Human) protein is Protein Wnt-5b (WNT5B).